The chain runs to 545 residues: CTP synthase (545 aa).

The segment at 1 to 266 (MKTNYIFVTG…DDYICKRFSL (266 aa)) is amidoligase domain. Ser-14 contacts CTP. Ser-14 serves as a coordination point for UTP. ATP contacts are provided by residues 15–20 (SLGKGI) and Asp-72. Mg(2+) is bound by residues Asp-72 and Glu-140. CTP-binding positions include 147–149 (DIE), 187–192 (KTKPTQ), and Lys-223. Residues 187–192 (KTKPTQ) and Lys-223 each bind UTP. Position 239 to 241 (239 to 241 (KDV)) interacts with ATP. Residues 291-542 (TIGMVGKYVE…VKAAGKYQKG (252 aa)) form the Glutamine amidotransferase type-1 domain. Gly-352 contacts L-glutamine. Catalysis depends on Cys-379, which acts as the Nucleophile; for glutamine hydrolysis. L-glutamine is bound by residues 380 to 383 (LGMQ), Glu-403, and Arg-470. Active-site residues include His-515 and Glu-517.

It belongs to the CTP synthase family. As to quaternary structure, homotetramer.

The enzyme catalyses UTP + L-glutamine + ATP + H2O = CTP + L-glutamate + ADP + phosphate + 2 H(+). It catalyses the reaction L-glutamine + H2O = L-glutamate + NH4(+). The catalysed reaction is UTP + NH4(+) + ATP = CTP + ADP + phosphate + 2 H(+). Its pathway is pyrimidine metabolism; CTP biosynthesis via de novo pathway; CTP from UDP: step 2/2. Its activity is regulated as follows. Allosterically activated by GTP, when glutamine is the substrate; GTP has no effect on the reaction when ammonia is the substrate. The allosteric effector GTP functions by stabilizing the protein conformation that binds the tetrahedral intermediate(s) formed during glutamine hydrolysis. Inhibited by the product CTP, via allosteric rather than competitive inhibition. Functionally, catalyzes the ATP-dependent amination of UTP to CTP with either L-glutamine or ammonia as the source of nitrogen. Regulates intracellular CTP levels through interactions with the four ribonucleotide triphosphates. This chain is CTP synthase, found in Photorhabdus laumondii subsp. laumondii (strain DSM 15139 / CIP 105565 / TT01) (Photorhabdus luminescens subsp. laumondii).